The following is a 1257-amino-acid chain: MNFSNKPNKSRKKSNRKNKKSNKSNTQKFFNENIVVDCDLFGVSENITNNAKSMNQVFDNESGISKRVQKPSVKNINKKNLKSKQKNRPAYWAQFDAQRFDSIGDPSAPNELYQSCDKSKLADLERQLSYQGGWTQFNSDSSMSYGIVSDDKLTHNNMMPYFSAKSGYGSNDLLNTSVMNYKNSLFTGNLKDTWKHKQEIKPHFKPVADSSYIHGTPIYSDDVRQRYESQASKLRQGEKLFDSIQVTPGLNLRHDEKGTHGYHSMYRPLEKTVDELRVRPKITYEGRIIEGMRGQERAAQAPVITYKPDTYKTTTKDDLLPTSDIKKAPKVIDNFIMKDTARHDQHIEYTGGAYTGSNHVGRNVPEYMQEKYKESTRQNFLAPKPMQKHSKTDTKFNPNLKSYELPFTLKDQNIHNKHPGITSSIFGNTTYSNLTDSAKFTNKQLIAEKSVTNTNIGTNNMRGTVHCMDIANPTIKEISVENRLNPNINGFSTIHRTYNPEIAKATIKETVIDNLEPSNVGQNIGSYANLTHNLNETIKETTVEIPQNNFVVPVGQYQRTPGLQDTTNPTIRETTVGINRNSNILPIGQYQRAPDMQDIARTTMNETIITTPWNNHITPINQQQSAPHPQDLFRSTLKETTIDLNRNSNILPIGQYQRAPNLQDNFRTSTRETTIEIPRHSQIIPTGQYQRAPNLQDNTNPTIRETTVGISRNSQIIPINQYQRAPNLQDNLKTSLKEITNSISRNSQVLPVGQYQRTPNLQDLPNTNLKEITNSMTRNTQINPVGQYQRAPDLQDITNPTLREITGNIHRNSFVVPVNQQQRAPDLQDIMNPTLRETTVGIHRNNIIIPVSQQQGPTNLQNNNNTTLKEISMSKHRNSIITPINQHQRAPNNQDIARSTLKETSIGIHRNTNIVPIGQQQRTPNPQDILNPTLRETIKIPYNTNINAVGQQQGRTNLTDSARSTIKETVVSIPQNYVTTAVGQQQGKTIQDSLRQTLKELNLENNHNSNIGTRENNLGAAHSFNRQPLRSTTKESIVDVPQNTHMTAVGQLKHKAPLLDTVRTTMKENIIQIPYNSVVTAVNQSQGSSSSFNREPLNTTIKEMVTDNKHIGQANHDGYGRGYGYLTEKKEAPNTNKQFTCQEVYIAPLEGHQKPKSYEAAYNAETNERKEALFKYRSPTDSGVNMGPDPDMINLKLRNDNHESRDPNTGYSFNNSLDRFNPQISSKISNSIDSCRNIDPMLVGQLDSNPFNIKYNI.

The disordered stretch occupies residues Met-1–Thr-26. The span at Asn-8 to Asn-22 shows a compositional bias: basic residues.

It localises to the virion. This is an uncharacterized protein from Acanthamoeba polyphaga mimivirus (APMV).